The primary structure comprises 87 residues: U3-theraphotoxin-Hhn1a 5 (87 aa).

An N-terminal signal peptide occupies residues 1-24 (MVNMKASMFLTFAGLVLLFVVCYA). A propeptide spanning residues 25-52 (SESEEKEFPKEMLSSIFAVDNDFKQEER) is cleaved from the precursor. 3 disulfide bridges follow: Cys-54–Cys-67, Cys-61–Cys-72, and Cys-66–Cys-79.

It belongs to the neurotoxin 10 (Hwtx-1) family. 51 (Hntx-8) subfamily. Hntx-8 sub-subfamily. In terms of tissue distribution, expressed by the venom gland.

It is found in the secreted. Its function is as follows. Ion channel inhibitor. The protein is U3-theraphotoxin-Hhn1a 5 of Cyriopagopus hainanus (Chinese bird spider).